The chain runs to 224 residues: Serum amyloid P-component (224 aa).

The first 19 residues, 1 to 19, serve as a signal peptide directing secretion; that stretch reads MNKLMSWVSVLIILPEAFA. The Pentraxin (PTX) domain occupies 24-224; it reads RGKVFVFPRE…YVIVKPMVWG (201 aa). Asn-51 carries an N-linked (GlcNAc...) asparagine glycan. Cys-55 and Cys-114 form a disulfide bridge. 5 residues coordinate Ca(2+): Asp-77, Asn-78, Glu-155, Gln-156, and Asp-157. An N-linked (GlcNAc...) asparagine glycan is attached at Asn-166. Gln-167 contacts Ca(2+).

It belongs to the pentraxin family. As to quaternary structure, homopentamer. Pentraxin (or pentaxin) have a discoid arrangement of 5 non-covalently bound subunits. The cofactor is Ca(2+).

The protein localises to the secreted. The sequence is that of Serum amyloid P-component (APCS) from Bos taurus (Bovine).